Reading from the N-terminus, the 406-residue chain is 2,3-bisphosphoglycerate-independent phosphoglycerate mutase (406 aa).

It belongs to the BPG-independent phosphoglycerate mutase family. A-PGAM subfamily.

It catalyses the reaction (2R)-2-phosphoglycerate = (2R)-3-phosphoglycerate. It functions in the pathway carbohydrate degradation; glycolysis; pyruvate from D-glyceraldehyde 3-phosphate: step 3/5. Functionally, catalyzes the interconversion of 2-phosphoglycerate and 3-phosphoglycerate. This is 2,3-bisphosphoglycerate-independent phosphoglycerate mutase from Methanococcus maripaludis (strain C7 / ATCC BAA-1331).